Consider the following 120-residue polypeptide: Large ribosomal subunit protein uL18 (120 aa).

Belongs to the universal ribosomal protein uL18 family. In terms of assembly, part of the 50S ribosomal subunit; part of the 5S rRNA/L5/L18/L25 subcomplex. Contacts the 5S and 23S rRNAs.

Its function is as follows. This is one of the proteins that bind and probably mediate the attachment of the 5S RNA into the large ribosomal subunit, where it forms part of the central protuberance. The chain is Large ribosomal subunit protein uL18 from Rhizobium johnstonii (strain DSM 114642 / LMG 32736 / 3841) (Rhizobium leguminosarum bv. viciae).